Reading from the N-terminus, the 213-residue chain is Thymidylate kinase (213 aa).

Position 10–17 (10–17 (GLEGAGKT)) interacts with ATP.

This sequence belongs to the thymidylate kinase family.

It catalyses the reaction dTMP + ATP = dTDP + ADP. Phosphorylation of dTMP to form dTDP in both de novo and salvage pathways of dTTP synthesis. The chain is Thymidylate kinase from Enterobacter sp. (strain 638).